Reading from the N-terminus, the 292-residue chain is Short chain dehydrogenase/reductase CPUR_05418 (292 aa).

NADP(+) is bound by residues isoleucine 44 and arginine 156. Active-site proton donor residues include serine 172 and tyrosine 186. Residues tyrosine 186, lysine 190, isoleucine 221, and threonine 223 each contribute to the NADP(+) site. The active-site Lowers pKa of active site Tyr is the lysine 190.

This sequence belongs to the short-chain dehydrogenases/reductases (SDR) family.

Its pathway is secondary metabolite biosynthesis. In terms of biological role, short chain dehydrogenase/reductase; part of the ergochrome gene cluster responsible for the typical purple-black color of the ergot sclerotia. The ergochrome gene cluster produces several ergot pigments including the yellow ergochrome secalonic acid and its derivatives, as well as the red anthraquinones endocrocin and clavorubin. The pathway begins with the synthesis of atrochrysone thioester by the polyketide synthase (PKS) CPUR_05437. The atrochrysone carboxyl ACP thioesterase CPUR_05436 then breaks the thioester bond and releases the atrochrysone carboxylic acid from CPUR_05437. The atrochrysone carboxylic acid is then converted to atrochrysone which is further transformed into emodin anthrone. The next step is performed by the anthrone oxygenase CPUR_05434 that catalyzes the oxidation of emodinanthrone to emodin. Emodin is further modified to yield monodictyphenone via several steps involving CPUR_05427, CPUR_05428, CPUR_05429 and CPUR_05430. The short chain dehydrogenase/reductase CPUR_05418 then catalyzes the C-5 ketoreduction to give the xanthone skeleton of the monomeric units. Ergochromes formation requires further dimerization steps of different xanthone units, probably catalyzed by the cytochrome P450 monooxygenase CPUR_05419. CPUR_05425, CPUR_05426 and CPUR_05431 are unique to Claviceps, thus it is likely that they are involved in further modification of xanthone units or in their dimerization. The yellow ergochromes and the red anthraquinone pigments endocrocin and clavorubin are products from the same PKS derived precursors and the latter are likely shunt products in the pathway of xanthone biosynthesis. It is proposed that atrochrysone carboxylic acid released from the PKS CPUR_05437 can also be converted to endocrocin anthrone which is further oxidized into endocrocin by CPUR_05435. Endocrocin could be then modified to clavorubin, possibly by CPUR_05423 and CPUR_05431. Clavorubin is the principal anthraquinone metabolite produced by the cluster with a much higher yield compared to endocrocin. This Claviceps purpurea (strain 20.1) (Ergot fungus) protein is Short chain dehydrogenase/reductase CPUR_05418.